The following is a 176-amino-acid chain: Ferritin, middle subunit (176 aa).

One can recognise a Ferritin-like diiron domain in the interval 7–156 (QNYHRDCEAA…DFITNLSRMD (150 aa)). Fe cation contacts are provided by glutamate 24, glutamate 59, histidine 62, glutamate 104, and glutamine 138.

Belongs to the ferritin family. As to quaternary structure, in liver, forms a heteromer consisting of middle and heavy subunits. In spleen, forms a homomer. The functional molecule forms a roughly spherical shell with a diameter of 12 nm and contains a central cavity into which the insoluble mineral iron core is deposited. As to expression, liver and spleen (at protein level).

The enzyme catalyses 4 Fe(2+) + O2 + 4 H(+) = 4 Fe(3+) + 2 H2O. Functionally, stores iron in a soluble, non-toxic, readily available form. Important for iron homeostasis. Has ferroxidase activity. Iron is taken up in the ferrous form and deposited as ferric hydroxides after oxidation. In Trematomus newnesi (Dusky notothen), this protein is Ferritin, middle subunit.